The primary structure comprises 250 residues: 3-deoxy-manno-octulosonate cytidylyltransferase (250 aa).

Belongs to the KdsB family.

It is found in the cytoplasm. The enzyme catalyses 3-deoxy-alpha-D-manno-oct-2-ulosonate + CTP = CMP-3-deoxy-beta-D-manno-octulosonate + diphosphate. The protein operates within nucleotide-sugar biosynthesis; CMP-3-deoxy-D-manno-octulosonate biosynthesis; CMP-3-deoxy-D-manno-octulosonate from 3-deoxy-D-manno-octulosonate and CTP: step 1/1. It participates in bacterial outer membrane biogenesis; lipopolysaccharide biosynthesis. In terms of biological role, activates KDO (a required 8-carbon sugar) for incorporation into bacterial lipopolysaccharide in Gram-negative bacteria. This is 3-deoxy-manno-octulosonate cytidylyltransferase from Francisella tularensis subsp. tularensis (strain FSC 198).